The following is a 294-amino-acid chain: Pantothenate synthetase 3 (294 aa).

31–38 (MGALHEGH) provides a ligand contact to ATP. The active-site Proton donor is the His38. Residue Gln62 coordinates (R)-pantoate. Gln62 provides a ligand contact to beta-alanine. Residue 154-157 (GEKD) participates in ATP binding. Gln160 contacts (R)-pantoate. Residue 191–194 (LSSR) coordinates ATP.

It belongs to the pantothenate synthetase family. In terms of assembly, homodimer.

It is found in the cytoplasm. It carries out the reaction (R)-pantoate + beta-alanine + ATP = (R)-pantothenate + AMP + diphosphate + H(+). The protein operates within cofactor biosynthesis; (R)-pantothenate biosynthesis; (R)-pantothenate from (R)-pantoate and beta-alanine: step 1/1. Functionally, catalyzes the condensation of pantoate with beta-alanine in an ATP-dependent reaction via a pantoyl-adenylate intermediate. In Frankia alni (strain DSM 45986 / CECT 9034 / ACN14a), this protein is Pantothenate synthetase 3.